A 174-amino-acid chain; its full sequence is UPF0340 protein SAHV_2098 (174 aa).

The protein belongs to the UPF0340 family.

The protein is UPF0340 protein SAHV_2098 of Staphylococcus aureus (strain Mu3 / ATCC 700698).